The sequence spans 415 residues: Homoserine O-succinyltransferase (415 aa).

The AB hydrolase-1 domain maps to 69 to 383 (NAVLVCHALN…PHGHDAFLLD (315 aa)). S175 functions as the Nucleophile in the catalytic mechanism. R245 is a substrate binding site. Residues D344 and H377 contribute to the active site. D378 is a binding site for substrate.

The protein belongs to the AB hydrolase superfamily. MetX family. In terms of assembly, homodimer.

It localises to the cytoplasm. It carries out the reaction L-homoserine + succinyl-CoA = O-succinyl-L-homoserine + CoA. The protein operates within amino-acid biosynthesis; L-methionine biosynthesis via de novo pathway; O-succinyl-L-homoserine from L-homoserine: step 1/1. Its function is as follows. Transfers a succinyl group from succinyl-CoA to L-homoserine, forming succinyl-L-homoserine. The protein is Homoserine O-succinyltransferase of Bordetella parapertussis (strain 12822 / ATCC BAA-587 / NCTC 13253).